We begin with the raw amino-acid sequence, 56 residues long: Protein p56 (56 aa).

Belongs to the phi29likevirus protein p56 family. As to quaternary structure, homodimer. Interacts with host UDG; this interaction inhibits the uracil-DNA glycosylase.

Inhibits the host uracil-DNA glycosylase (UDG), an enzyme which removes uracil residues from DNA by the base excision repair. Interacts with host uracil-DNA glycosylase and prevents the latter from binding to DNA. Since the viral DNA polymerase efficiently incorporates dUMP into DNA, the virus needs to prevent the deleterious effect caused by host UDG when it eliminates uracil residues present in the viral genome. The protein is Protein p56 (1B) of Bacillus phage PZA (Bacteriophage PZA).